The sequence spans 2325 residues: Otogelin-like protein (2325 aa).

The N-terminal stretch at 1–22 (MVPWRALSLPILLVSLRGYVCA) is a signal peptide. A VWFD 1 domain is found at 112–288 (GICKTWGQYH…VLTPDDTKCV (177 aa)). Disulfide bonds link cysteine 114-cysteine 248 and cysteine 136-cysteine 287. Residue asparagine 425 is glycosylated (N-linked (GlcNAc...) asparagine). The VWFD 2 domain maps to 472–645 (VQCSVVGDSH…HAWRVSSTCF (174 aa)). 3 disulfide bridges follow: cysteine 474-cysteine 609, cysteine 496-cysteine 644, and cysteine 518-cysteine 526. Residues 736 to 791 (CQKGMLYHHCSSLCLRSCTSLSSPEQCKDDCAEGCNCPEGKFYEETLNFCVPIYHC) form the TIL 1 domain. Residues asparagine 817 and asparagine 867 are each glycosylated (N-linked (GlcNAc...) asparagine). The region spanning 937-1114 (AVCTVYGDRH…DLMEALKPCE (178 aa)) is the VWFD 3 domain. Disulfide bonds link cysteine 939-cysteine 1069, cysteine 961-cysteine 1113, and cysteine 983-cysteine 990. Residue asparagine 1280 is glycosylated (N-linked (GlcNAc...) asparagine). One can recognise a TIL 2 domain in the interval 1366-1418 (RYEPCATPCFKTCSDPEALACTFLPPVEGCLPYCPKNMILDETTLKCVHPEDC). One can recognise a VWFD 4 domain in the interval 1506–1695 (CRCSMLSELS…SWEIEKSFEV (190 aa)). 2 disulfide bridges follow: cysteine 1508–cysteine 1655 and cysteine 1549–cysteine 1571. Asparagine 1576 and asparagine 2170 each carry an N-linked (GlcNAc...) asparagine glycan. 4 cysteine pairs are disulfide-bonded: cysteine 2233/cysteine 2289, cysteine 2254/cysteine 2303, cysteine 2265/cysteine 2320, and cysteine 2269/cysteine 2322. One can recognise a CTCK domain in the interval 2233–2325 (CKREERICQK…EPIDCTCQWN (93 aa)). An N-linked (GlcNAc...) asparagine glycan is attached at asparagine 2296.

It belongs to the otogelin family.

It is found in the secreted. This chain is Otogelin-like protein (Otogl), found in Mus musculus (Mouse).